A 66-amino-acid polypeptide reads, in one-letter code: MAFLKKSLFLVLFLGLVSLSICEEEKRETEEEENEQEDDDKSEEKRFLSLIPHAINAVSAIAKHFG.

A signal peptide spans 1–22 (MAFLKKSLFLVLFLGLVSLSIC). Residues 23–44 (EEEKRETEEEENEQEDDDKSEE) constitute a propeptide that is removed on maturation. The interval 24–44 (EEKRETEEEENEQEDDDKSEE) is disordered. Residues 30-41 (EEEENEQEDDDK) are compositionally biased toward acidic residues. At phenylalanine 65 the chain carries Phenylalanine amide.

As to expression, expressed by the skin glands.

It is found in the secreted. In terms of biological role, has antibacterial activity against the Gram-negative bacteria E.coli and P.aeruginosa, and the Gram-positive bacterium S.aureus. No hemolytic activity. This Pithecopus hypochondrialis (Orange-legged leaf frog) protein is Phylloseptin-H5 (psn7).